A 217-amino-acid polypeptide reads, in one-letter code: Uridylate kinase (217 aa).

ATP is bound at residue 6–10; that stretch reads KLSGR. Position 38 (glycine 38) interacts with UMP. Positions 39 and 43 each coordinate ATP. UMP is bound by residues aspartate 60 and 107–113; that span reads FQPGQST. ATP-binding residues include asparagine 134, tyrosine 139, and aspartate 142.

It belongs to the UMP kinase family. In terms of assembly, homohexamer.

The protein resides in the cytoplasm. It carries out the reaction UMP + ATP = UDP + ADP. The protein operates within pyrimidine metabolism; CTP biosynthesis via de novo pathway; UDP from UMP (UMPK route): step 1/1. Inhibited by UTP. In terms of biological role, catalyzes the reversible phosphorylation of UMP to UDP. This Pyrobaculum aerophilum (strain ATCC 51768 / DSM 7523 / JCM 9630 / CIP 104966 / NBRC 100827 / IM2) protein is Uridylate kinase.